The primary structure comprises 177 residues: Prorelaxin (177 aa).

The N-terminal stretch at 1–22 is a signal peptide; the sequence is MSCKFVLQLLGFWLLLSQPCRA. Disulfide bonds link Cys36–Cys164, Cys48–Cys177, and Cys163–Cys168. The propeptide at 64–149 is connecting peptide; the sequence is MTEEAVSSFI…LKSLYLDTLS (86 aa). The interval 80-114 is disordered; it reads FDTMPNLSEKPKTALPEGHPSLPEQQQYVPVSSDS. Residues 102–114 show a composition bias toward polar residues; it reads PEQQQYVPVSSDS.

Belongs to the insulin family. Heterodimer of a B chain and an A chain linked by two disulfide bonds.

Its subcellular location is the secreted. In terms of biological role, relaxin is an ovarian hormone that acts with estrogen to produce dilatation of the birth canal in many mammals. It bears mature young, and allows separation of the pelvic bones. The chain is Prorelaxin (RLN) from Mesocricetus auratus (Golden hamster).